A 446-amino-acid chain; its full sequence is ATP-dependent protease ATPase subunit HslU (446 aa).

Residues I17, 59 to 64 (GVGKTE), D255, E320, and R392 contribute to the ATP site.

This sequence belongs to the ClpX chaperone family. HslU subfamily. As to quaternary structure, a double ring-shaped homohexamer of HslV is capped on each side by a ring-shaped HslU homohexamer. The assembly of the HslU/HslV complex is dependent on binding of ATP.

It is found in the cytoplasm. Its function is as follows. ATPase subunit of a proteasome-like degradation complex; this subunit has chaperone activity. The binding of ATP and its subsequent hydrolysis by HslU are essential for unfolding of protein substrates subsequently hydrolyzed by HslV. HslU recognizes the N-terminal part of its protein substrates and unfolds these before they are guided to HslV for hydrolysis. The sequence is that of ATP-dependent protease ATPase subunit HslU from Pseudomonas fluorescens (strain ATCC BAA-477 / NRRL B-23932 / Pf-5).